The chain runs to 429 residues: Z-DNA-binding protein 1 (429 aa).

Z-binding domains are found at residues Pro8 to Gly70 and Pro103 to Arg166. The disordered stretch occupies residues Leu68–Gln107. 2 short sequence motifs (RIP homotypic interaction motif (RHIM)) span residues Asn195–Val219 and Asp253–Val277. Disordered stretches follow at residues Val277–Pro299 and Lys339–Ile429. Positions Ala347 to Gly358 are enriched in gly residues. Residues Lys407–His420 are compositionally biased toward basic and acidic residues.

In terms of assembly, homodimer. Interacts (via RIP homotypic interaction motif) with RIPK3; leading to RIPK3 activation and necroptosis; interaction is enhanced by CASP6. Interacts (via RIP homotypic interaction motif) with RIPK1. Component of the AIM2 PANoptosome complex, a multiprotein complex that drives inflammatory cell death (PANoptosis). As to quaternary structure, (Microbial infection) Interacts (via RIP homotypic interaction motif/RHIM) with herpes simplex virus 1/HHV-1 protein RIR1/ICP6 (via RHIM); this interaction may induce heteromeric amyloid assemblies and prevent necroptosis activation. Interacts with human herpes simplex virus 1/HHV-1 protein ICP0. In terms of processing, phosphorylated. As to expression, highly expressed in lymphatic tissues including lymph node, leukocytes, tonsil, bone marrow and spleen. Expressed to a lesser extent in thymus, lung and liver.

Its subcellular location is the cytoplasm. It localises to the nucleus. ZBP1-dependent necroptosis is normally inhibited by RIPK1: RIPK1 inhibits the ZBP1-induced activation of RIPK3 via FADD-mediated recruitment of CASP8, which cleaves RIPK1 and limits TNF-induced necroptosis. Functionally, key innate sensor that recognizes and binds Z-RNA structures, which are produced by a number of viruses, such as herpesvirus, orthomyxovirus or flavivirus, and triggers different forms of cell death. ZBP1 acts as an essential mediator of pyroptosis, necroptosis and apoptosis (PANoptosis), an integral part of host defense against pathogens, by activating RIPK3, caspase-8 (CASP8), and the NLRP3 inflammasome. Key activator of necroptosis, a programmed cell death process in response to death-inducing TNF-alpha family members, via its ability to bind Z-RNA: once activated upon Z-RNA-binding, ZBP1 interacts and stimulates RIPK3 kinase, which phosphorylates and activates MLKL, triggering execution of programmed necrosis. In addition to TNF-induced necroptosis, necroptosis can also take place in the nucleus in response to orthomyxoviruses infection: ZBP1 recognizes and binds Z-RNA structures that are produced in infected nuclei by orthomyxoviruses, such as the influenza A virus (IAV), leading to ZBP1 activation, RIPK3 stimulation and subsequent MLKL phosphorylation, triggering disruption of the nuclear envelope and leakage of cellular DNA into the cytosol. ZBP1-dependent cell death in response to IAV infection promotes interleukin-1 alpha (IL1A) induction in an NLRP3-inflammasome-independent manner: IL1A expression is required for the optimal interleukin-1 beta (IL1B) production, and together, these cytokines promote infiltration of inflammatory neutrophils to the lung, leading to the formation of neutrophil extracellular traps. In addition to its direct role in driving necroptosis via its ability to sense Z-RNAs, also involved in PANoptosis triggered in response to bacterial infection: component of the AIM2 PANoptosome complex, a multiprotein complex that triggers PANoptosis. Also acts as the apical sensor of fungal infection responsible for activating PANoptosis. Involved in CASP8-mediated cell death via its interaction with RIPK1 but independently of its ability to sense Z-RNAs. In some cell types, also able to restrict viral replication by promoting cell death-independent responses. In response to Zika virus infection in neurons, promotes a cell death-independent pathway that restricts viral replication: together with RIPK3, promotes a death-independent transcriptional program that modifies the cellular metabolism via up-regulation expression of the enzyme ACOD1/IRG1 and production of the metabolite itaconate. Itaconate inhibits the activity of succinate dehydrogenase, generating a metabolic state in neurons that suppresses replication of viral genomes. (Microbial infection) In case of herpes simplex virus 1/HHV-1 infection, forms hetero-amyloid structures with HHV-1 protein RIR1/ICP6 which may inhibit ZBP1-mediated necroptosis, thereby preventing host cell death pathway and allowing viral evasion. In Homo sapiens (Human), this protein is Z-DNA-binding protein 1.